Consider the following 109-residue polypeptide: Sperm-specific class P protein 19 (109 aa).

The 109-residue stretch at 1 to 109 (MSLTADPPAC…TVTIPMSATA (109 aa)) folds into the MSP domain.

As to quaternary structure, monomer. In terms of tissue distribution, expressed at higher level in testis.

The sequence is that of Sperm-specific class P protein 19 (ssp-19) from Caenorhabditis elegans.